The chain runs to 411 residues: Na(+)-translocating NADH-quinone reductase subunit F (411 aa).

A helical membrane pass occupies residues 6–26 (AIGGVAMFTLIIMSFVAIILA). The region spanning 35–129 (GDVTIHINDN…DMKIEIDPEF (95 aa)) is the 2Fe-2S ferredoxin-type domain. [2Fe-2S] cluster contacts are provided by Cys72, Cys78, Cys81, and Cys113. The region spanning 132–273 (VQKWECEVIS…SGPYGEFFAK (142 aa)) is the FAD-binding FR-type domain.

The protein belongs to the NqrF family. As to quaternary structure, composed of six subunits; NqrA, NqrB, NqrC, NqrD, NqrE and NqrF. [2Fe-2S] cluster serves as cofactor. FAD is required as a cofactor.

It is found in the cell inner membrane. The catalysed reaction is a ubiquinone + n Na(+)(in) + NADH + H(+) = a ubiquinol + n Na(+)(out) + NAD(+). Functionally, NQR complex catalyzes the reduction of ubiquinone-1 to ubiquinol by two successive reactions, coupled with the transport of Na(+) ions from the cytoplasm to the periplasm. The first step is catalyzed by NqrF, which accepts electrons from NADH and reduces ubiquinone-1 to ubisemiquinone by a one-electron transfer pathway. This Psychrobacter arcticus (strain DSM 17307 / VKM B-2377 / 273-4) protein is Na(+)-translocating NADH-quinone reductase subunit F.